The chain runs to 813 residues: LPS-assembly protein LptD (813 aa).

The N-terminal stretch at Met-1–Ala-22 is a signal peptide.

The protein belongs to the LptD family. In terms of assembly, component of the lipopolysaccharide transport and assembly complex. Interacts with LptE and LptA.

The protein resides in the cell outer membrane. Together with LptE, is involved in the assembly of lipopolysaccharide (LPS) at the surface of the outer membrane. The chain is LPS-assembly protein LptD from Xanthomonas oryzae pv. oryzae (strain KACC10331 / KXO85).